The primary structure comprises 142 residues: Large ribosomal subunit protein uL13 (142 aa).

This sequence belongs to the universal ribosomal protein uL13 family. In terms of assembly, part of the 50S ribosomal subunit.

Functionally, this protein is one of the early assembly proteins of the 50S ribosomal subunit, although it is not seen to bind rRNA by itself. It is important during the early stages of 50S assembly. This Methylococcus capsulatus (strain ATCC 33009 / NCIMB 11132 / Bath) protein is Large ribosomal subunit protein uL13.